A 59-amino-acid polypeptide reads, in one-letter code: Large ribosomal subunit protein uL30 (59 aa).

This sequence belongs to the universal ribosomal protein uL30 family. Part of the 50S ribosomal subunit.

The polypeptide is Large ribosomal subunit protein uL30 (Enterococcus faecalis (strain ATCC 700802 / V583)).